We begin with the raw amino-acid sequence, 571 residues long: CDT1-like protein a, chloroplastic (571 aa).

Residues 1–79 (MSTPGSSRSI…GSRRRSEDPV (79 aa)) constitute a chloroplast transit peptide. Disordered regions lie at residues 1-110 (MSTP…EKEK) and 288-315 (TTSS…TPAK). A compositionally biased stretch (polar residues) spans 22–38 (SPSSKSQTGNPNPSSVA). The span at 81 to 96 (SSAKSRLFFDSSSSSP) shows a compositional bias: low complexity. The span at 288–302 (TTSSLAKPTSSQINI) shows a compositional bias: polar residues. Residues 303–315 (APTPTKPTSTPAK) are compositionally biased toward low complexity.

It belongs to the Cdt1 family. Binds to ARC6. Post-translationally, phosphorylated by cyclin D- and cyclin A-containing CDKA-1, and thus targeted to proteasome-mediated proteolysis. In terms of tissue distribution, expressed in proliferating (e.g. shoot and root apical meristems, organ primordia) and endoreplicating cells (e.g. guard cells and stomatal lineage, developing trichomes).

The protein localises to the plastid. The protein resides in the chloroplast. Its function is as follows. Member of the pre-replication complex. Component of the plastid division machinery. Promotes polyloidization and regulates endoreduplication. Involved in the coordination of cell and plastid division. This is CDT1-like protein a, chloroplastic (CDT1A) from Arabidopsis thaliana (Mouse-ear cress).